We begin with the raw amino-acid sequence, 145 residues long: MEAILKSIMLLKYLQFIIIFCSGLCMALVICTKAKSGKGTNTAKSSGGNNGTNLNAKRSNTTQDDVKFNLNIKNTEQKRDEFDDDEENPLAKIPTKARLPKKDTLSKTSSNSKMDREASYFAPNEKQTGKSCYMSTAMSTTKTTT.

The interval 37–123 (GKGTNTAKSS…MDREASYFAP (87 aa)) is disordered. Polar residues predominate over residues 38–63 (KGTNTAKSSGGNNGTNLNAKRSNTTQ).

This is an uncharacterized protein from Caenorhabditis elegans.